A 197-amino-acid polypeptide reads, in one-letter code: Inner membrane-spanning protein YciB (197 aa).

Transmembrane regions (helical) follow at residues 22-42, 48-68, 76-96, 121-141, and 144-164; these read IYSA…YHWF, PSMM…TLIF, WKPS…HLIG, AAWV…AYTF, and EIWV…FLIG.

It belongs to the YciB family.

The protein localises to the cell inner membrane. Plays a role in cell envelope biogenesis, maintenance of cell envelope integrity and membrane homeostasis. In Magnetococcus marinus (strain ATCC BAA-1437 / JCM 17883 / MC-1), this protein is Inner membrane-spanning protein YciB.